We begin with the raw amino-acid sequence, 259 residues long: Type III pantothenate kinase (259 aa).

Position 6-13 (Asp6–Thr13) interacts with ATP. Gly113–Arg116 is a binding site for substrate. The active-site Proton acceptor is Asp115. Residue Asp135 participates in K(+) binding. Thr138 contacts ATP. Position 190 (Thr190) interacts with substrate.

It belongs to the type III pantothenate kinase family. In terms of assembly, homodimer. The cofactor is NH4(+). Requires K(+) as cofactor.

Its subcellular location is the cytoplasm. It catalyses the reaction (R)-pantothenate + ATP = (R)-4'-phosphopantothenate + ADP + H(+). The protein operates within cofactor biosynthesis; coenzyme A biosynthesis; CoA from (R)-pantothenate: step 1/5. Its function is as follows. Catalyzes the phosphorylation of pantothenate (Pan), the first step in CoA biosynthesis. The chain is Type III pantothenate kinase from Endomicrobium trichonymphae.